The chain runs to 481 residues: Protein nucleotidyltransferase YdiU (481 aa).

8 residues coordinate ATP: G85, G87, R88, K108, D120, G121, R171, and R178. D248 functions as the Proton acceptor in the catalytic mechanism. N249 and D258 together coordinate Mg(2+). Residue D258 participates in ATP binding. The segment at H458–S481 is disordered.

It belongs to the SELO family. Requires Mg(2+) as cofactor. It depends on Mn(2+) as a cofactor.

The enzyme catalyses L-seryl-[protein] + ATP = 3-O-(5'-adenylyl)-L-seryl-[protein] + diphosphate. The catalysed reaction is L-threonyl-[protein] + ATP = 3-O-(5'-adenylyl)-L-threonyl-[protein] + diphosphate. It catalyses the reaction L-tyrosyl-[protein] + ATP = O-(5'-adenylyl)-L-tyrosyl-[protein] + diphosphate. It carries out the reaction L-histidyl-[protein] + UTP = N(tele)-(5'-uridylyl)-L-histidyl-[protein] + diphosphate. The enzyme catalyses L-seryl-[protein] + UTP = O-(5'-uridylyl)-L-seryl-[protein] + diphosphate. The catalysed reaction is L-tyrosyl-[protein] + UTP = O-(5'-uridylyl)-L-tyrosyl-[protein] + diphosphate. Nucleotidyltransferase involved in the post-translational modification of proteins. It can catalyze the addition of adenosine monophosphate (AMP) or uridine monophosphate (UMP) to a protein, resulting in modifications known as AMPylation and UMPylation. This is Protein nucleotidyltransferase YdiU from Hydrogenovibrio crunogenus (strain DSM 25203 / XCL-2) (Thiomicrospira crunogena).